The chain runs to 431 residues: Adenylosuccinate synthetase (431 aa).

GTP is bound by residues 12 to 18 (GDEGKGK) and 40 to 42 (GHT). Residue aspartate 13 is the Proton acceptor of the active site. Residues aspartate 13 and glycine 40 each contribute to the Mg(2+) site. IMP contacts are provided by residues 13-16 (DEGK), 38-41 (NAGH), threonine 131, arginine 145, glutamine 225, threonine 240, and arginine 304. Residue histidine 41 is the Proton donor of the active site. Position 300–306 (300–306 (TNTGRRR)) interacts with substrate. Residues arginine 306, 332 to 334 (KLD), and 414 to 416 (STS) contribute to the GTP site.

This sequence belongs to the adenylosuccinate synthetase family. As to quaternary structure, homodimer. Mg(2+) is required as a cofactor.

It localises to the cytoplasm. The catalysed reaction is IMP + L-aspartate + GTP = N(6)-(1,2-dicarboxyethyl)-AMP + GDP + phosphate + 2 H(+). The protein operates within purine metabolism; AMP biosynthesis via de novo pathway; AMP from IMP: step 1/2. Its function is as follows. Plays an important role in the de novo pathway of purine nucleotide biosynthesis. Catalyzes the first committed step in the biosynthesis of AMP from IMP. This chain is Adenylosuccinate synthetase, found in Methylocella silvestris (strain DSM 15510 / CIP 108128 / LMG 27833 / NCIMB 13906 / BL2).